The sequence spans 349 residues: Holliday junction branch migration complex subunit RuvB (349 aa).

A large ATPase domain (RuvB-L) region spans residues 1 to 183; that stretch reads MTDPSRLVTP…FGIPIRLNFY (183 aa). Residues Leu22, Arg23, Gly64, Lys67, Thr68, Thr69, 130 to 132, Arg173, Tyr183, and Arg220 each bind ATP; that span reads EDF. Position 68 (Thr68) interacts with Mg(2+). The segment at 184–254 is small ATPAse domain (RuvB-S); the sequence is TIEELESIVT…IADHALGALE (71 aa). Residues 257-349 are head domain (RuvB-H); it reads SAGLDAMDRR…GLFGDTGDQE (93 aa). The DNA site is built by Arg293, Arg312, and Arg317.

This sequence belongs to the RuvB family. As to quaternary structure, homohexamer. Forms an RuvA(8)-RuvB(12)-Holliday junction (HJ) complex. HJ DNA is sandwiched between 2 RuvA tetramers; dsDNA enters through RuvA and exits via RuvB. An RuvB hexamer assembles on each DNA strand where it exits the tetramer. Each RuvB hexamer is contacted by two RuvA subunits (via domain III) on 2 adjacent RuvB subunits; this complex drives branch migration. In the full resolvosome a probable DNA-RuvA(4)-RuvB(12)-RuvC(2) complex forms which resolves the HJ.

Its subcellular location is the cytoplasm. It carries out the reaction ATP + H2O = ADP + phosphate + H(+). Functionally, the RuvA-RuvB-RuvC complex processes Holliday junction (HJ) DNA during genetic recombination and DNA repair, while the RuvA-RuvB complex plays an important role in the rescue of blocked DNA replication forks via replication fork reversal (RFR). RuvA specifically binds to HJ cruciform DNA, conferring on it an open structure. The RuvB hexamer acts as an ATP-dependent pump, pulling dsDNA into and through the RuvAB complex. RuvB forms 2 homohexamers on either side of HJ DNA bound by 1 or 2 RuvA tetramers; 4 subunits per hexamer contact DNA at a time. Coordinated motions by a converter formed by DNA-disengaged RuvB subunits stimulates ATP hydrolysis and nucleotide exchange. Immobilization of the converter enables RuvB to convert the ATP-contained energy into a lever motion, pulling 2 nucleotides of DNA out of the RuvA tetramer per ATP hydrolyzed, thus driving DNA branch migration. The RuvB motors rotate together with the DNA substrate, which together with the progressing nucleotide cycle form the mechanistic basis for DNA recombination by continuous HJ branch migration. Branch migration allows RuvC to scan DNA until it finds its consensus sequence, where it cleaves and resolves cruciform DNA. This Rhodopseudomonas palustris (strain ATCC BAA-98 / CGA009) protein is Holliday junction branch migration complex subunit RuvB.